The chain runs to 392 residues: Putative cystathionine gamma-lyase (392 aa).

Over residues 1 to 10 (MSDSATTDSA) the composition is skewed to polar residues. Residues 1-41 (MSDSATTDSAGTGGERSASAPGDGTRAVRAGLPEPVKHEPT) form a disordered region. Position 216 is an N6-(pyridoxal phosphate)lysine (Lys216).

This sequence belongs to the trans-sulfuration enzymes family. It depends on pyridoxal 5'-phosphate as a cofactor.

The protein resides in the cytoplasm. It catalyses the reaction L,L-cystathionine + H2O = 2-oxobutanoate + L-cysteine + NH4(+). Its pathway is amino-acid biosynthesis; L-cysteine biosynthesis; L-cysteine from L-homocysteine and L-serine: step 2/2. The polypeptide is Putative cystathionine gamma-lyase (cysA) (Streptomyces coelicolor (strain ATCC BAA-471 / A3(2) / M145)).